The following is a 218-amino-acid chain: Phosphatidylserine decarboxylase proenzyme (218 aa).

Catalysis depends on S187, which acts as the Schiff-base intermediate with substrate; via pyruvic acid. Residue S187 is modified to Pyruvic acid (Ser); by autocatalysis.

This sequence belongs to the phosphatidylserine decarboxylase family. PSD-A subfamily. As to quaternary structure, heterodimer of a large membrane-associated beta subunit and a small pyruvoyl-containing alpha subunit. The cofactor is pyruvate. In terms of processing, is synthesized initially as an inactive proenzyme. Formation of the active enzyme involves a self-maturation process in which the active site pyruvoyl group is generated from an internal serine residue via an autocatalytic post-translational modification. Two non-identical subunits are generated from the proenzyme in this reaction, and the pyruvate is formed at the N-terminus of the alpha chain, which is derived from the carboxyl end of the proenzyme. The post-translation cleavage follows an unusual pathway, termed non-hydrolytic serinolysis, in which the side chain hydroxyl group of the serine supplies its oxygen atom to form the C-terminus of the beta chain, while the remainder of the serine residue undergoes an oxidative deamination to produce ammonia and the pyruvoyl prosthetic group on the alpha chain.

Its subcellular location is the cell membrane. The enzyme catalyses a 1,2-diacyl-sn-glycero-3-phospho-L-serine + H(+) = a 1,2-diacyl-sn-glycero-3-phosphoethanolamine + CO2. The protein operates within phospholipid metabolism; phosphatidylethanolamine biosynthesis; phosphatidylethanolamine from CDP-diacylglycerol: step 2/2. Functionally, catalyzes the formation of phosphatidylethanolamine (PtdEtn) from phosphatidylserine (PtdSer). The polypeptide is Phosphatidylserine decarboxylase proenzyme (Geobacter metallireducens (strain ATCC 53774 / DSM 7210 / GS-15)).